Consider the following 294-residue polypeptide: 2,2',3-trihydroxybiphenyl dioxygenase (294 aa).

VOC domains are found at residues 7–120 (GYLI…LYVE) and 144–264 (GLGH…LGFG). Residues histidine 147, histidine 209, and glutamate 260 each coordinate Fe cation.

Belongs to the extradiol ring-cleavage dioxygenase family. As to quaternary structure, monomer. It depends on Fe(2+) as a cofactor.

It functions in the pathway xenobiotic degradation; dibenzo-p-dioxin degradation; 2-hydroxymuconate and catechol from dibenzo-p-dioxin: step 2/3. Its pathway is xenobiotic degradation; dibenzofuran degradation; 2-hydroxy-2,4-pentadienoate and salicylate from dibenzofuran: step 2/3. Functionally, responsible for meta-cleavage of the first aromatic ring of 2,2',3-trihydroxybiphenyl and 2,3-dihydroxybiphenyl. 2,2',3-trihydroxydiphenyl ether, catechol, 3-methylcatechol, and 4-methylcatechol are oxidized less efficiently and 3,4-dihydroxybiphenyl is oxidized considerably less efficiently. This chain is 2,2',3-trihydroxybiphenyl dioxygenase (dbfB), found in Sphingomonas paucimobilis (Pseudomonas paucimobilis).